The chain runs to 834 residues: MKLCGVRSSGVSLTRSSDFPRFRAAHHGGAHTATRHQSLCGRRLDSYMGAGKRWCFRPLLAEPRRYSNASSAFTTDGATAPAHGEGLYVSHYAMPEDARRLVGTPQLLPRNPAEEVAFKKNLIRSFPQACIRNVSVVAHVDHGKTTLSDAMLRFSNLLPADGATGTFTDRLKVEKERGITIKAQTCSVLLTLRETGTQYLVNLIDTPGHVDFQYEVSRSLCASEGAALLVDVRQGVEAQTMAQFYAALEQNLTILPVLTKMDSVMSDAEVEKTLLQLEDSTGLLSREVILTSAKSKRGIEQLFQHIIDKVPPPCGREGFSDMKQLPAMHPGSADRKKVEKELVPLRALLFDCWTSESSGMADGAASAPVSTASSVSSGTAPASGGQSVAKDGIYGLIRVMDGTVTPGTTVTFFHSGKKHEVREVGIIHPTLHPTAALTAGMVGFVFFPGLLKKDVFIGDTLCTLPTRKHTMRVVATGSPATASRTKPATAAETASSDDASGSGSSSVVEPIPGFKTVQPVVFAGFYPDEGVYITQLREAVDLLCVNDPSVTVEQLQCPALGPGLQLGFLGFLHMQVFKERLLMEFGQAVLVTPPQVQYMYVEQHGDPDDPAQRKPVSVSNWRWPHEGVGAYLEPFVTATVLTPSEYLNEINSAALSAFRGEMQEMRVIDGARTLVRYRMPLADLARGFFSTVKSSSHGYATLEYDDLTYMTADLVKMDIVINKAHISALSTICLRHEANTHARRIIGSLKEKLLRSSVDLPLQALVGSKIIARETVKAYRKDVTAKIHAGDISRKQKKWNDQKKGKERMARRSVGTVTLDQSVLAAALGATTAR.

A mitochondrion-targeting transit peptide spans 1–66; it reads MKLCGVRSSG…RPLLAEPRRY (66 aa). Positions 129–314 constitute a tr-type G domain; sequence ACIRNVSVVA…HIIDKVPPPC (186 aa). GTP contacts are provided by residues 138-145, 205-209, and 259-262; these read AHVDHGKT, DTPGH, and TKMD. Disordered regions lie at residues 363–385 and 476–507; these read GAAS…ASGG and TGSP…SSSV. Over residues 488 to 507 the composition is skewed to low complexity; the sequence is ATAAETASSDDASGSGSSSV.

It belongs to the TRAFAC class translation factor GTPase superfamily. Classic translation factor GTPase family. LepA subfamily.

The protein resides in the mitochondrion inner membrane. The catalysed reaction is GTP + H2O = GDP + phosphate + H(+). Functionally, promotes mitochondrial protein synthesis. May act as a fidelity factor of the translation reaction, by catalyzing a one-codon backward translocation of tRNAs on improperly translocated ribosomes. Binds to mitochondrial ribosomes in a GTP-dependent manner. In Leishmania infantum, this protein is Translation factor GUF1 homolog, mitochondrial.